Reading from the N-terminus, the 130-residue chain is Zinc finger A20 and AN1 domain-containing stress-associated protein 10 (130 aa).

The A20-type zinc-finger motif lies at 4–38 (ETEALPCEGGCGLYGTRVNNNLCSLCYKKSVLQHS). Zn(2+) contacts are provided by Cys10, Cys14, Cys26, Cys29, Cys71, Cys74, Cys85, Cys87, Cys92, His95, His101, and Cys103. The AN1-type zinc-finger motif lies at 65-111 (PVKKRRCGICKRKVGMLGFKCRCGHMFCGSHRYPEEHSCPFDYKQSG).

In terms of biological role, may be involved in environmental stress response. This Arabidopsis thaliana (Mouse-ear cress) protein is Zinc finger A20 and AN1 domain-containing stress-associated protein 10 (SAP10).